The sequence spans 109 residues: ATP-dependent Clp protease adapter protein ClpS (109 aa).

The interval 1–20 (MAERKQGGQGNGVGSSVVTE) is disordered.

Belongs to the ClpS family. In terms of assembly, binds to the N-terminal domain of the chaperone ClpA.

Involved in the modulation of the specificity of the ClpAP-mediated ATP-dependent protein degradation. This is ATP-dependent Clp protease adapter protein ClpS from Caulobacter vibrioides (strain NA1000 / CB15N) (Caulobacter crescentus).